The chain runs to 351 residues: Homocitrate synthase (351 aa).

Positions 23–272 (IKFCDTTLRD…KLPVDLDTTS (250 aa)) constitute a Pyruvate carboxyltransferase domain.

The protein belongs to the alpha-IPM synthase/homocitrate synthase family.

It carries out the reaction acetyl-CoA + 2-oxoglutarate + H2O = (2R)-homocitrate + CoA + H(+). Functionally, this protein is a Fe-Mo-cofactor biosynthetic component. This chain is Homocitrate synthase (nifV), found in Frankia alni.